Here is a 1096-residue protein sequence, read N- to C-terminus: Carbamoyl phosphate synthase large chain (1096 aa).

The interval 1-402 (MPKRDDINSV…ALQKALRSLE (402 aa)) is carboxyphosphate synthetic domain. Residues Arg129, Arg169, Gly175, Gly176, Glu208, Ile210, Glu215, Gly241, Val242, His243, Gln285, and Glu299 each contribute to the ATP site. Residues 133–328 (KDLVIESGAD…IAKIAAKLAI (196 aa)) form the ATP-grasp 1 domain. Mg(2+)-binding residues include Gln285, Glu299, and Asn301. 3 residues coordinate Mn(2+): Gln285, Glu299, and Asn301. The segment at 403-547 (KRGSSFHWGA…YSSYDSETEI (145 aa)) is oligomerization domain. The segment at 548-950 (VPSDRRKVII…AFAKSQEAAF (403 aa)) is carbamoyl phosphate synthetic domain. Positions 676-870 (SGILDAAGLV…LAKAASLVMV (195 aa)) constitute an ATP-grasp 2 domain. Residues Arg712, Arg754, Leu756, Glu761, Gly786, Ile787, His788, Ser789, Gln829, and Glu841 each coordinate ATP. Positions 829, 841, and 843 each coordinate Mg(2+). Residues Gln829, Glu841, and Asn843 each coordinate Mn(2+). One can recognise an MGS-like domain in the interval 951–1095 (GGLPLSGTVF…QDYAIAREAR (145 aa)). An allosteric domain region spans residues 951–1096 (GGLPLSGTVF…DYAIAREARR (146 aa)).

It belongs to the CarB family. As to quaternary structure, composed of two chains; the small (or glutamine) chain promotes the hydrolysis of glutamine to ammonia, which is used by the large (or ammonia) chain to synthesize carbamoyl phosphate. Tetramer of heterodimers (alpha,beta)4. Mg(2+) serves as cofactor. Requires Mn(2+) as cofactor.

It catalyses the reaction hydrogencarbonate + L-glutamine + 2 ATP + H2O = carbamoyl phosphate + L-glutamate + 2 ADP + phosphate + 2 H(+). It carries out the reaction hydrogencarbonate + NH4(+) + 2 ATP = carbamoyl phosphate + 2 ADP + phosphate + 2 H(+). It participates in amino-acid biosynthesis; L-arginine biosynthesis; carbamoyl phosphate from bicarbonate: step 1/1. It functions in the pathway pyrimidine metabolism; UMP biosynthesis via de novo pathway; (S)-dihydroorotate from bicarbonate: step 1/3. Its function is as follows. Large subunit of the glutamine-dependent carbamoyl phosphate synthetase (CPSase). CPSase catalyzes the formation of carbamoyl phosphate from the ammonia moiety of glutamine, carbonate, and phosphate donated by ATP, constituting the first step of 2 biosynthetic pathways, one leading to arginine and/or urea and the other to pyrimidine nucleotides. The large subunit (synthetase) binds the substrates ammonia (free or transferred from glutamine from the small subunit), hydrogencarbonate and ATP and carries out an ATP-coupled ligase reaction, activating hydrogencarbonate by forming carboxy phosphate which reacts with ammonia to form carbamoyl phosphate. The chain is Carbamoyl phosphate synthase large chain from Clavibacter sepedonicus (Clavibacter michiganensis subsp. sepedonicus).